Here is a 588-residue protein sequence, read N- to C-terminus: Proteasome-associated ATPase (588 aa).

A compositionally biased stretch (basic and acidic residues) spans 1 to 10 (MAAHDDDINR). The interval 1 to 22 (MAAHDDDINRGTRPARGSEDPA) is disordered. Residues 47-94 (RILEERIVELQTNLAGVSAQNERLANTLREARDQIVALKEEVDRLAQP) are a coiled coil. Residue 276-281 (GCGKTL) coordinates ATP. The tract at residues 587-588 (YL) is docks into pockets in the proteasome alpha-ring.

It belongs to the AAA ATPase family. Homohexamer. Assembles into a hexameric ring structure that caps the 20S proteasome core. Strongly interacts with the prokaryotic ubiquitin-like protein Pup through a hydrophobic interface; the interacting region of ARC lies in its N-terminal coiled-coil domain. There is one Pup binding site per ARC hexamer ring. Upon ATP-binding, the C-terminus of ARC interacts with the alpha-rings of the proteasome core, possibly by binding to the intersubunit pockets.

The protein operates within protein degradation; proteasomal Pup-dependent pathway. Functionally, ATPase which is responsible for recognizing, binding, unfolding and translocation of pupylated proteins into the bacterial 20S proteasome core particle. May be essential for opening the gate of the 20S proteasome via an interaction with its C-terminus, thereby allowing substrate entry and access to the site of proteolysis. Thus, the C-termini of the proteasomal ATPase may function like a 'key in a lock' to induce gate opening and therefore regulate proteolysis. The polypeptide is Proteasome-associated ATPase (Streptomyces griseus subsp. griseus (strain JCM 4626 / CBS 651.72 / NBRC 13350 / KCC S-0626 / ISP 5235)).